The primary structure comprises 141 residues: Transcriptional regulator MraZ (141 aa).

SpoVT-AbrB domains lie at 5–47 and 75–118; these read EYNH…PNEE and AADC…SKER.

This sequence belongs to the MraZ family. Forms oligomers.

The protein localises to the cytoplasm. Its subcellular location is the nucleoid. The protein is Transcriptional regulator MraZ of Lachnoclostridium phytofermentans (strain ATCC 700394 / DSM 18823 / ISDg) (Clostridium phytofermentans).